A 250-amino-acid chain; its full sequence is Phosphoribosylaminoimidazole-succinocarboxamide synthase (250 aa).

The protein belongs to the SAICAR synthetase family.

The enzyme catalyses 5-amino-1-(5-phospho-D-ribosyl)imidazole-4-carboxylate + L-aspartate + ATP = (2S)-2-[5-amino-1-(5-phospho-beta-D-ribosyl)imidazole-4-carboxamido]succinate + ADP + phosphate + 2 H(+). It functions in the pathway purine metabolism; IMP biosynthesis via de novo pathway; 5-amino-1-(5-phospho-D-ribosyl)imidazole-4-carboxamide from 5-amino-1-(5-phospho-D-ribosyl)imidazole-4-carboxylate: step 1/2. The sequence is that of Phosphoribosylaminoimidazole-succinocarboxamide synthase from Synechococcus sp. (strain CC9605).